A 574-amino-acid polypeptide reads, in one-letter code: Urease subunit alpha (574 aa).

Residues 131-574 (GAIDSHIHFI…LPMAQRYLLI (444 aa)) enclose the Urease domain. The Ni(2+) site is built by His-136, His-138, and Lys-219. Lys-219 bears the N6-carboxylysine mark. His-221 contacts substrate. The Ni(2+) site is built by His-248 and His-274. The active-site Proton donor is the His-322. A Ni(2+)-binding site is contributed by Asp-362.

This sequence belongs to the metallo-dependent hydrolases superfamily. Urease alpha subunit family. Heterotrimer of UreA (gamma), UreB (beta) and UreC (alpha) subunits. Three heterotrimers associate to form the active enzyme. Ni cation is required as a cofactor. Carboxylation allows a single lysine to coordinate two nickel ions.

It localises to the cytoplasm. The enzyme catalyses urea + 2 H2O + H(+) = hydrogencarbonate + 2 NH4(+). It functions in the pathway nitrogen metabolism; urea degradation; CO(2) and NH(3) from urea (urease route): step 1/1. In Prochlorococcus marinus (strain MIT 9303), this protein is Urease subunit alpha.